Consider the following 140-residue polypeptide: Relaxin-3 (140 aa).

Residues 1–26 (MAKRPLLLLLLAVWVLAGELWLRTEA) form the signal peptide. 3 disulfide bridges follow: Cys36/Cys127, Cys48/Cys140, and Cys126/Cys131. A propeptide spans 56-116 (SDMLAHEALG…RTPGALRGSR (61 aa)) (connecting peptide).

It belongs to the insulin family. In terms of assembly, heterodimer of a B chain and an A chain linked by two disulfide bonds.

It localises to the secreted. May play a role in neuropeptide signaling processes. Ligand for LGR7, RXFP3 and RXFP4. This is Relaxin-3 (RLN3) from Sus scrofa (Pig).